The following is a 189-amino-acid chain: dCTP deaminase (189 aa).

DCTP is bound by residues 112 to 117 (KSTYAR), 136 to 138 (TLE), Gln-157, Tyr-171, and Gln-181. Residue Glu-138 is the Proton donor/acceptor of the active site.

It belongs to the dCTP deaminase family. As to quaternary structure, homotrimer.

It catalyses the reaction dCTP + H2O + H(+) = dUTP + NH4(+). Its pathway is pyrimidine metabolism; dUMP biosynthesis; dUMP from dCTP (dUTP route): step 1/2. Its function is as follows. Catalyzes the deamination of dCTP to dUTP. The sequence is that of dCTP deaminase from Leptothrix cholodnii (strain ATCC 51168 / LMG 8142 / SP-6) (Leptothrix discophora (strain SP-6)).